We begin with the raw amino-acid sequence, 493 residues long: Lysine--tRNA ligase (493 aa).

Residues Glu403 and Glu410 each contribute to the Mg(2+) site.

The protein belongs to the class-II aminoacyl-tRNA synthetase family. Homodimer. Mg(2+) is required as a cofactor.

Its subcellular location is the cytoplasm. The enzyme catalyses tRNA(Lys) + L-lysine + ATP = L-lysyl-tRNA(Lys) + AMP + diphosphate. This chain is Lysine--tRNA ligase, found in Wigglesworthia glossinidia brevipalpis.